Consider the following 401-residue polypeptide: tRNA(Met) cytidine acetate ligase (401 aa).

Residues 7 to 20 (IVEYNPFHNGHLYH), Gly102, Asn164, and Arg189 each bind ATP.

Belongs to the TmcAL family.

It is found in the cytoplasm. The enzyme catalyses cytidine(34) in elongator tRNA(Met) + acetate + ATP = N(4)-acetylcytidine(34) in elongator tRNA(Met) + AMP + diphosphate. Catalyzes the formation of N(4)-acetylcytidine (ac(4)C) at the wobble position of elongator tRNA(Met), using acetate and ATP as substrates. First activates an acetate ion to form acetyladenylate (Ac-AMP) and then transfers the acetyl group to tRNA to form ac(4)C34. This Thermoanaerobacter pseudethanolicus (strain ATCC 33223 / 39E) (Clostridium thermohydrosulfuricum) protein is tRNA(Met) cytidine acetate ligase.